The primary structure comprises 477 residues: Glutamate--tRNA ligase (477 aa).

The 'HIGH' region motif lies at 8–18; that stretch reads PSPTGTLHIGT. Positions 247–251 match the 'KMSKS' region motif; it reads KLSKR. Lysine 250 contacts ATP.

It belongs to the class-I aminoacyl-tRNA synthetase family. Glutamate--tRNA ligase type 1 subfamily. In terms of assembly, monomer.

The protein resides in the cytoplasm. The catalysed reaction is tRNA(Glu) + L-glutamate + ATP = L-glutamyl-tRNA(Glu) + AMP + diphosphate. In terms of biological role, catalyzes the attachment of glutamate to tRNA(Glu) in a two-step reaction: glutamate is first activated by ATP to form Glu-AMP and then transferred to the acceptor end of tRNA(Glu). This chain is Glutamate--tRNA ligase, found in Synechococcus sp. (strain CC9605).